The following is a 451-amino-acid chain: PTS system galactitol-specific EIIC component (451 aa).

Residues 6–435 form the PTS EIIC type-2 domain; sequence MRYILDLGPT…IYLTGIFMTW (430 aa). 10 helical membrane-spanning segments follow: residues 9 to 29, 41 to 61, 92 to 112, 138 to 158, 218 to 238, 305 to 325, 329 to 349, 357 to 377, 392 to 412, and 415 to 435; these read ILDL…SKIL, LHIG…LDSI, ASQI…AMLL, LATG…AFVY, FGPF…IGIL, AVVS…VCVP, VLPF…VAVH, LISG…TIGL, GMVA…IQVF, and QNIP…FMTW.

Forms a complex with one each of subunit of GatA, GatB and 2 subunits of GatC.

Its subcellular location is the cell inner membrane. Its function is as follows. The phosphoenolpyruvate-dependent sugar phosphotransferase system (PTS), a major carbohydrate active transport system, catalyzes the phosphorylation of incoming sugar substrates concomitant with their translocation across the cell membrane. The enzyme II complex composed of GatA, GatB and GatC is involved in galactitol transport. The chain is PTS system galactitol-specific EIIC component (gatC) from Escherichia coli O157:H7.